A 202-amino-acid chain; its full sequence is 3-isopropylmalate dehydratase small subunit (202 aa).

This sequence belongs to the LeuD family. LeuD type 1 subfamily. As to quaternary structure, heterodimer of LeuC and LeuD.

It catalyses the reaction (2R,3S)-3-isopropylmalate = (2S)-2-isopropylmalate. It participates in amino-acid biosynthesis; L-leucine biosynthesis; L-leucine from 3-methyl-2-oxobutanoate: step 2/4. Its function is as follows. Catalyzes the isomerization between 2-isopropylmalate and 3-isopropylmalate, via the formation of 2-isopropylmaleate. The protein is 3-isopropylmalate dehydratase small subunit of Caulobacter vibrioides (strain ATCC 19089 / CIP 103742 / CB 15) (Caulobacter crescentus).